Consider the following 149-residue polypeptide: Transcriptional regulator MraZ (149 aa).

2 consecutive SpoVT-AbrB domains span residues 7–54 and 83–126; these read KYIN…GIAH and AVQL…QPQN.

It belongs to the MraZ family. As to quaternary structure, forms oligomers.

Its subcellular location is the cytoplasm. The protein resides in the nucleoid. The protein is Transcriptional regulator MraZ of Rickettsia typhi (strain ATCC VR-144 / Wilmington).